Reading from the N-terminus, the 715-residue chain is Lactococcin-A transport/processing ATP-binding protein LcnC (715 aa).

Residues glutamine 11 to leucine 138 enclose the Peptidase C39 domain. Cysteine 17 is a catalytic residue. 6 helical membrane passes run valine 167–tyrosine 187, isoleucine 197–isoleucine 217, leucine 237–phenylalanine 257, threonine 282–leucine 302, leucine 307–proline 327, and alanine 396–serine 416. Residues isoleucine 168 to lysine 450 enclose the ABC transmembrane type-1 domain. In terms of domain architecture, ABC transporter spans leucine 482–asparagine 715. An ATP-binding site is contributed by glycine 515–serine 522.

The protein belongs to the ABC transporter superfamily. Bacteriocin (lactococcin) exporter (TC 3.A.1.112.3) family.

The protein localises to the cell membrane. In terms of biological role, involved in the export process of the bacteriocin lactococcin A. This chain is Lactococcin-A transport/processing ATP-binding protein LcnC (lcnC), found in Lactococcus lactis subsp. lactis (Streptococcus lactis).